Reading from the N-terminus, the 509-residue chain is tRNA (guanine(37)-N(1))-methyltransferase (509 aa).

S-adenosyl-L-methionine contacts are provided by residues His289, 327-328 (DL), 355-356 (DG), and Asn387. The disordered stretch occupies residues 478-509 (TRNPENHEDPPLKRQRTAEAFSDEKTQIVSNT).

The protein belongs to the class I-like SAM-binding methyltransferase superfamily. TRM5/TYW2 family. Monomer.

It localises to the mitochondrion matrix. The protein localises to the nucleus. It is found in the cytoplasm. It carries out the reaction guanosine(37) in tRNA + S-adenosyl-L-methionine = N(1)-methylguanosine(37) in tRNA + S-adenosyl-L-homocysteine + H(+). Functionally, involved in mitochondrial tRNA methylation. Specifically methylates the N1 position of guanosine-37 in various tRNAs. Methylation is not dependent on the nature of the nucleoside 5' of the target nucleoside. This is the first step in the biosynthesis of wybutosine (yW), a modified base adjacent to the anticodon of tRNAs and required for accurate decoding. This is tRNA (guanine(37)-N(1))-methyltransferase from Homo sapiens (Human).